The following is a 476-amino-acid chain: Nuclear envelope morphology protein 1 (476 aa).

The disordered stretch occupies residues 47-74 (RRRSSYSASSLSSLSSKPTEKEVPTRNE). The segment covering 51–62 (SYSASSLSSLSS) has biased composition (low complexity). The segment covering 64–74 (PTEKEVPTRNE) has biased composition (basic and acidic residues). The helical transmembrane segment at 123–139 (FFWGLCRFVFFPVLLSY) threads the bilayer. 2 disordered regions span residues 164–190 (SSHQDPAYSSFKRHRSSNSYSSSSNGN) and 232–256 (GKANSNRSGHSHQPQSTQFSPPAND). Positions 234-256 (ANSNRSGHSHQPQSTQFSPPAND) are enriched in polar residues. 4 N-linked (GlcNAc...) asparagine glycosylation sites follow: Asn-237, Asn-257, Asn-284, and Asn-356. One can recognise an FCP1 homology domain in the interval 299–460 (SKLPRKTLVL…LNLLSFLHAL (162 aa)).

Belongs to the Dullard family. As to quaternary structure, component of the nem1-spo7 complex.

It is found in the endoplasmic reticulum membrane. The protein localises to the nucleus membrane. The catalysed reaction is O-phospho-L-seryl-[protein] + H2O = L-seryl-[protein] + phosphate. The enzyme catalyses O-phospho-L-threonyl-[protein] + H2O = L-threonyl-[protein] + phosphate. Functionally, catalytic component of the nem1-spo7 complex which acts as a phosphatase and may be required for proper nuclear membrane morphology. The polypeptide is Nuclear envelope morphology protein 1 (nem1) (Schizosaccharomyces pombe (strain 972 / ATCC 24843) (Fission yeast)).